A 267-amino-acid chain; its full sequence is Hydroxyethylthiazole kinase 2 (267 aa).

Substrate is bound at residue Met-41. The ATP site is built by Lys-116 and Thr-166. Position 193 (Gly-193) interacts with substrate.

This sequence belongs to the Thz kinase family. Mg(2+) is required as a cofactor.

It carries out the reaction 5-(2-hydroxyethyl)-4-methylthiazole + ATP = 4-methyl-5-(2-phosphooxyethyl)-thiazole + ADP + H(+). It participates in cofactor biosynthesis; thiamine diphosphate biosynthesis; 4-methyl-5-(2-phosphoethyl)-thiazole from 5-(2-hydroxyethyl)-4-methylthiazole: step 1/1. Its function is as follows. Catalyzes the phosphorylation of the hydroxyl group of 4-methyl-5-beta-hydroxyethylthiazole (THZ). The protein is Hydroxyethylthiazole kinase 2 of Streptococcus pneumoniae (strain Taiwan19F-14).